Reading from the N-terminus, the 197-residue chain is Proteasome subunit beta 1 (197 aa).

Positions 1-6 (MNRKTG) are cleaved as a propeptide — removed in mature form; by autocatalysis. The active-site Nucleophile is T7.

Belongs to the peptidase T1B family. The 20S proteasome core is composed of 14 alpha and 14 beta subunits that assemble into four stacked heptameric rings, resulting in a barrel-shaped structure. The two inner rings, each composed of seven catalytic beta subunits, are sandwiched by two outer rings, each composed of seven alpha subunits. The catalytic chamber with the active sites is on the inside of the barrel. Has a gated structure, the ends of the cylinder being occluded by the N-termini of the alpha-subunits. Is capped at one or both ends by the proteasome regulatory ATPase, PAN.

Its subcellular location is the cytoplasm. It carries out the reaction Cleavage of peptide bonds with very broad specificity.. With respect to regulation, the formation of the proteasomal ATPase PAN-20S proteasome complex, via the docking of the C-termini of PAN into the intersubunit pockets in the alpha-rings, triggers opening of the gate for substrate entry. Interconversion between the open-gate and close-gate conformations leads to a dynamic regulation of the 20S proteasome proteolysis activity. In terms of biological role, component of the proteasome core, a large protease complex with broad specificity involved in protein degradation. In Pyrococcus abyssi (strain GE5 / Orsay), this protein is Proteasome subunit beta 1.